The primary structure comprises 66 residues: MAKGKDVRITVILECTGCVRNGVNKVSTGISRYITEKNRHNTPNRLELRKFCPFCYKHTMHGEIKK.

It belongs to the bacterial ribosomal protein bL33 family.

The protein resides in the plastid. It localises to the chloroplast. The protein is Large ribosomal subunit protein bL33c of Daucus carota (Wild carrot).